The primary structure comprises 653 residues: Aspartate--tRNA ligase, mitochondrial (653 aa).

The transit peptide at 1–46 directs the protein to the mitochondrion; it reads MYLGFWLSRLCRGLSRPIGKTMRPIWGSLSRNLALSSQRIPEFSSF. Residue Thr218 is modified to Phosphothreonine. Ser241 carries the phosphoserine modification. The aspartate stretch occupies residues 243-246; that stretch reads QQFK. Arg265 contacts L-aspartate. ATP is bound by residues 265–267 and Glu534; that span reads RDE. Arg541 serves as a coordination point for L-aspartate. 583–586 is a binding site for ATP; sequence GLDR.

The protein belongs to the class-II aminoacyl-tRNA synthetase family. Type 1 subfamily. Homodimer.

The protein localises to the mitochondrion matrix. It localises to the mitochondrion membrane. It carries out the reaction tRNA(Asp) + L-aspartate + ATP = L-aspartyl-tRNA(Asp) + AMP + diphosphate. In terms of biological role, catalyzes the attachment of aspartate to tRNA(Asp) in a two-step reaction: aspartate is first activated by ATP to form Asp-AMP and then transferred to the acceptor end of tRNA(Asp). In Mus musculus (Mouse), this protein is Aspartate--tRNA ligase, mitochondrial (Dars2).